A 491-amino-acid chain; its full sequence is Ketol-acid reductoisomerase (NADP(+)) (491 aa).

The 192-residue stretch at 17-208 (LGKCRFMSRD…GGHRAGVLES (192 aa)) folds into the KARI N-terminal Rossmann domain. Residues 45–48 (CGAQ), Arg68, Arg76, Ser78, and 108–110 (DKQ) contribute to the NADP(+) site. Residue His132 is part of the active site. An NADP(+)-binding site is contributed by Gly158. 2 consecutive KARI C-terminal knotted domains span residues 209–344 (SFVA…NYPE) and 345–484 (YEGK…MTDM). 4 residues coordinate Mg(2+): Asp217, Glu221, Glu389, and Glu393. Ser414 serves as a coordination point for substrate.

The protein belongs to the ketol-acid reductoisomerase family. The cofactor is Mg(2+).

It carries out the reaction (2R)-2,3-dihydroxy-3-methylbutanoate + NADP(+) = (2S)-2-acetolactate + NADPH + H(+). It catalyses the reaction (2R,3R)-2,3-dihydroxy-3-methylpentanoate + NADP(+) = (S)-2-ethyl-2-hydroxy-3-oxobutanoate + NADPH + H(+). Its pathway is amino-acid biosynthesis; L-isoleucine biosynthesis; L-isoleucine from 2-oxobutanoate: step 2/4. It functions in the pathway amino-acid biosynthesis; L-valine biosynthesis; L-valine from pyruvate: step 2/4. In terms of biological role, involved in the biosynthesis of branched-chain amino acids (BCAA). Catalyzes an alkyl-migration followed by a ketol-acid reduction of (S)-2-acetolactate (S2AL) to yield (R)-2,3-dihydroxy-isovalerate. In the isomerase reaction, S2AL is rearranged via a Mg-dependent methyl migration to produce 3-hydroxy-3-methyl-2-ketobutyrate (HMKB). In the reductase reaction, this 2-ketoacid undergoes a metal-dependent reduction by NADPH to yield (R)-2,3-dihydroxy-isovalerate. The sequence is that of Ketol-acid reductoisomerase (NADP(+)) from Proteus mirabilis (strain HI4320).